We begin with the raw amino-acid sequence, 284 residues long: Bifunctional protein FolD (284 aa).

Residues 166-168 (GAS) and isoleucine 232 contribute to the NADP(+) site.

It belongs to the tetrahydrofolate dehydrogenase/cyclohydrolase family. Homodimer.

It catalyses the reaction (6R)-5,10-methylene-5,6,7,8-tetrahydrofolate + NADP(+) = (6R)-5,10-methenyltetrahydrofolate + NADPH. The enzyme catalyses (6R)-5,10-methenyltetrahydrofolate + H2O = (6R)-10-formyltetrahydrofolate + H(+). It functions in the pathway one-carbon metabolism; tetrahydrofolate interconversion. Functionally, catalyzes the oxidation of 5,10-methylenetetrahydrofolate to 5,10-methenyltetrahydrofolate and then the hydrolysis of 5,10-methenyltetrahydrofolate to 10-formyltetrahydrofolate. This is Bifunctional protein FolD from Shewanella sp. (strain ANA-3).